The sequence spans 397 residues: MNCISDFFTYETTKSVVVKSWTIGIINRAVQLLIISYFVGWVFLHEKAYQVRDTAIESSVVTKVKGFGRYANRVMDVSDYVTPPQGTSVFVIITKMIVTENQMQGFCPENEEKYRCVSDSQCGPERFPGGGILTGRCVNYSSVRRTCEIQGWCPTEVDTVEMPIMMEAENFTIFIKNSIRFPLFNFEKGNLLPNLTDKDIKKCRFHPEKAPFCPILRVGDVVKFAGQDFAKLARTGGVLGIKIGWVCDLDKAWDQCIPKYSFTRLDGVSEKSSVSPGYNFRFAKYYKMENGSEYRTLLKAFGIRFDVLVYGNAGKFNIIPTIISSVAAFTSVGVGTVLCDIILLNFLKGADHYKARKFEEVTETTLKGTASTNPVFTSDQATVEKQSTDSGAYSIGH.

The Cytoplasmic portion of the chain corresponds to Met-1 to Ser-20. A helical transmembrane segment spans residues Trp-21–Phe-43. Over Leu-44 to Ile-322 the chain is Extracellular. Residues Lys-63 and Lys-65 each contribute to the ATP site. Disulfide bonds link Cys-107/Cys-153, Cys-116/Cys-137, and Cys-122/Cys-147. Position 111 (Glu-111) interacts with Mg(2+). Asn-139 is a glycosylation site (N-linked (GlcNAc...) asparagine). Asp-158 serves as a coordination point for Mg(2+). Asp-158 provides a ligand contact to Ca(2+). The N-linked (GlcNAc...) asparagine glycan is linked to Asn-170. Thr-172 provides a ligand contact to ATP. N-linked (GlcNAc...) asparagine glycosylation is present at Asn-194. Cystine bridges form between Cys-203/Cys-213 and Cys-247/Cys-256. Residues Ser-275, Asn-279, and Arg-281 each coordinate ATP. A glycan (N-linked (GlcNAc...) asparagine) is linked at Asn-290. Lys-299 contacts ATP. A helical transmembrane segment spans residues Ile-323–Ile-341. At Ile-342 to His-397 the chain is on the cytoplasmic side.

This sequence belongs to the P2X receptor family. As to quaternary structure, homotrimer. Forms heterotrimer with P2RX2. Heterotrimeric P2RX2/3 has a ligand dose-response profile that is distinct from either homotrimeric P2RX2 or P2RX3.

The protein localises to the cell membrane. It carries out the reaction Ca(2+)(in) = Ca(2+)(out). It catalyses the reaction Na(+)(in) = Na(+)(out). Its activity is regulated as follows. Has high sensitivity to ATP. Fast activation by external ATP. Exhibits rapid desensitization. Sensitives to the ATP agonist:alpha/beta-methylene-ATP. Subject to allosteric inhibition by AF-219. Mg(2+) and Ca(2+) slow deactivation of P2RX3. In terms of biological role, extracellular ATP-activated non-selective cation channel. Plays particularly important role in sensory neurons where its activation is critical for gustatory, nociceptive responses, visceral reflexes and sensory hypersensitization. In Mus musculus (Mouse), this protein is P2X purinoceptor 3 (P2rx3).